A 213-amino-acid polypeptide reads, in one-letter code: Chloramphenicol acetyltransferase 3 (213 aa).

Catalysis depends on His-189, which acts as the Proton acceptor.

It belongs to the chloramphenicol acetyltransferase family. As to quaternary structure, homotrimer.

The enzyme catalyses chloramphenicol + acetyl-CoA = chloramphenicol 3-acetate + CoA. Functionally, this enzyme is an effector of chloramphenicol resistance in bacteria. This chain is Chloramphenicol acetyltransferase 3 (cat3), found in Escherichia coli.